The chain runs to 409 residues: Broad specificity amino-acid racemase (409 aa).

A signal peptide spans 1–25; sequence MRLKKTLLSIAIAAATFTPAMHSIA. Cys-72 and Cys-98 are disulfide-bonded. Residue Lys-76 is the Proton acceptor of the active site. The residue at position 76 (Lys-76) is an N6-(pyridoxal phosphate)lysine. Residue Arg-175 coordinates substrate. The Proton acceptor role is filled by Tyr-301. Residue Met-349 participates in substrate binding.

The protein belongs to the alanine racemase family. Bsr subfamily. Pyridoxal 5'-phosphate is required as a cofactor.

Its subcellular location is the periplasm. The catalysed reaction is an L-alpha-amino acid = a D-alpha-amino acid. It catalyses the reaction L-lysine = D-lysine. It carries out the reaction L-arginine = D-arginine. In terms of biological role, amino-acid racemase able to utilize a broad range of substrates. In Vibrio parahaemolyticus serotype O3:K6 (strain RIMD 2210633), this protein is Broad specificity amino-acid racemase.